Here is a 247-residue protein sequence, read N- to C-terminus: tRNA (guanine-N(1)-)-methyltransferase (247 aa).

Residue G126 participates in S-adenosyl-L-methionine binding.

The protein belongs to the RNA methyltransferase TrmD family. As to quaternary structure, homodimer.

The protein localises to the cytoplasm. It carries out the reaction guanosine(37) in tRNA + S-adenosyl-L-methionine = N(1)-methylguanosine(37) in tRNA + S-adenosyl-L-homocysteine + H(+). In terms of biological role, specifically methylates guanosine-37 in various tRNAs. The sequence is that of tRNA (guanine-N(1)-)-methyltransferase from Jannaschia sp. (strain CCS1).